Consider the following 791-residue polypeptide: Protein Rf1, mitochondrial (791 aa).

Residues 1–27 (MARRAASRAVGALRSDGSIQGRGGRAG) constitute a mitochondrion transit peptide. Residues 1–31 (MARRAASRAVGALRSDGSIQGRGGRAGGSGA) are disordered. The segment covering 20–30 (QGRGGRAGGSG) has biased composition (gly residues). PPR repeat units lie at residues 86-120 (DLCT…GFRV), 121-156 (DAIA…GCIP), 157-194 (NVFS…GSPP), 195-229 (DVVS…GILP), 230-264 (DVVT…GVMP), 265-299 (DCMT…GVEP), 300-334 (DVVT…GLKP), 335-369 (EITT…GIHP), 370-404 (DHYV…GLNP), 405-439 (NAVT…GLSP), 440-474 (GNIV…GICL), 475-509 (NTIF…GVKP), 510-544 (NVIT…GLKP), 545-579 (NTVT…GVSP), 580-614 (DIIT…GTQI), 615-649 (ELST…DLKL), 650-684 (EART…GLVP), 685-719 (NYWT…GCTV), and 720-754 (DSGM…HFSL).

It is found in the mitochondrion. Reduces the expression of the cytoplasmic male sterility (CMS)-associated mitochondrial gene ORF79, encoding a cytotoxic peptide. Can restore male fertility by blocking ORF79 production via endonucleolytic cleavage of dicistronic ATP6/ORF79 mRNA. Promotes the editing of ATP6 mRNAs independently of its cleavage function. The protein is Protein Rf1, mitochondrial (Rf1) of Oryza sativa subsp. indica (Rice).